The sequence spans 164 residues: V-type proton ATPase 16 kDa proteolipid subunit (164 aa).

Residues 1–9 are Lumenal-facing; it reads MSNFAGDET. A helical membrane pass occupies residues 10–32; the sequence is APFFGFLGAAAALVFSCMGAAYG. The Cytoplasmic portion of the chain corresponds to 33–54; the sequence is TAKSGVGVASMGVMRPELVMKS. Residues 55–75 form a helical membrane-spanning segment; the sequence is IVPVVMAGVLGIYGLIIAVII. Over 76 to 94 the chain is Lumenal; sequence STGINPKTKSYYLFDGYAH. The helical transmembrane segment at 95-116 threads the bilayer; that stretch reads LSSGLACGLAGLSAGMAIGIVG. Over 117–128 the chain is Cytoplasmic; it reads DAGVRANAQQPK. Residues 129 to 154 form a helical membrane-spanning segment; sequence LFVGMILILIFAEALALYGLIVGIIL. Topologically, residues 155-164 are lumenal; sequence SSRAGQSRAE.

Belongs to the V-ATPase proteolipid subunit family. As to quaternary structure, V-ATPase is a heteromultimeric enzyme composed of a peripheral catalytic V1 complex (main components: subunits A, B, C, D, E, and F) attached to an integral membrane V0 proton pore complex (main component: the proteolipid protein; which is present as a hexamer that forms the proton-conducting pore).

It is found in the vacuole membrane. Its function is as follows. Proton-conducting pore forming subunit of the membrane integral V0 complex of vacuolar ATPase. V-ATPase is responsible for acidifying a variety of intracellular compartments in eukaryotic cells. The chain is V-type proton ATPase 16 kDa proteolipid subunit from Solanum lycopersicum (Tomato).